The sequence spans 352 residues: Blue-sensitive opsin (352 aa).

The Extracellular portion of the chain corresponds to 1-42 (MRGNRLVEFPDDFWIPIPLDTNNVTALSPFLVPQDHLGSPTI). An N-linked (GlcNAc...) asparagine glycan is attached at N23. A helical membrane pass occupies residues 43–67 (FYSMSALMFVLFVAGTAINLLTIAC). The Cytoplasmic segment spans residues 68-79 (TLQYKKLRSHLN). Residues 80 to 105 (YILVNMAVANLIVASTGSSTCFVCFA) form a helical membrane-spanning segment. The Extracellular portion of the chain corresponds to 106 to 119 (FKYMVLGPLGCKIE). An intrachain disulfide couples C116 to C193. Residues 120–139 (GFTAALGGMVSLWSLAVIAF) traverse the membrane as a helical segment. Topologically, residues 140-158 (ERWLVICKPLGNFVFKSEH) are cytoplasmic. A helical membrane pass occupies residues 159–182 (ALLCCALTWVCGLCASVPPLVGWS). Residues 183–208 (RYIPEGMQCSCGPDWYTTGNKFNNES) are Extracellular-facing. The N-linked (GlcNAc...) asparagine glycan is linked to N206. The helical transmembrane segment at 209 to 236 (FVMFLFCFCFAVPFSIIVFCYSQLLFTL) threads the bilayer. Residues 237–258 (KMAAKAQADSASTQKAEKEVTR) lie on the Cytoplasmic side of the membrane. Residues 259–282 (MVVVMVVAFLVCYVPYASFALWVI) traverse the membrane as a helical segment. Residues 283-290 (NNRGQTFD) are Extracellular-facing. A helical transmembrane segment spans residues 291 to 315 (LRLATIPSCVSKASTVYNPVIYVLL). K302 carries the N6-(retinylidene)lysine modification. Over 316–352 (NKQFRLCMKKMLGMSADEDEESSTSQSTTEVSKVGPS) the chain is Cytoplasmic. The segment at 332–352 (DEDEESSTSQSTTEVSKVGPS) is disordered.

Belongs to the G-protein coupled receptor 1 family. Opsin subfamily. Post-translationally, phosphorylated on some or all of the serine and threonine residues present in the C-terminal region. As to expression, the color pigments are found in the cone photoreceptor cells.

Its subcellular location is the membrane. In terms of biological role, visual pigments are the light-absorbing molecules that mediate vision. They consist of an apoprotein, opsin, covalently linked to cis-retinal. This Oryzias latipes (Japanese rice fish) protein is Blue-sensitive opsin.